The following is a 287-amino-acid chain: X-box-binding protein 1 (287 aa).

The bZIP domain maps to E61–L117. The tract at residues K63–A87 is disordered. Residues K63–K88 are basic motif. Residues A78–A87 show a composition bias toward basic and acidic residues. Residues I89–L117 are leucine-zipper.

In terms of assembly, interacts with SUMO-conjugating enzyme ubc-9; the interaction is direct. Post-translationally, sumoylated. Sumoylation may negatively modulate the transcription of genes involved in the ER-stress-response.

The protein localises to the nucleus. Required for transcriptional regulation of the unfolded protein response (UPR) in the endoplasmic reticulum (ER) under stressed conditions, acting downstream of ire-1, and also maintaining ER homeostasis via a negative feedback loop, in parallel with ER kinase pek-1. May also regulate Golgi protein trafficking distal to the ER. Protects the host organism from the detrimental effects of mounting an innate immune response to microbes, such as the Gram-negative bacterium P.aeruginosa, probably by modulating the UPR. In terms of biological role, plays a role in the unconventional cytoplasmic splicing processing of its own mRNA triggered by the endoplasmic reticulum (ER) transmembrane endoribonuclease ire-1: upon ER stress, the emerging xbp-1 polypeptide chain, as part of a mRNA-ribosome-nascent chain (R-RNC) complex, cotranslationally recruits its own unprocessed mRNA through transient docking to the ER membrane and translational pausing, therefore facilitating efficient ire-1-mediated xbp-1 mRNA isoform 2 production. Its function is as follows. Functions as a stress-inducible potent transcriptional activator during endoplasmic reticulum (ER) stress by inducing unfolded protein response (UPR) target genes via binding to the UPR element (UPRE). Plays a role in modulation of the UPR, lipid metabolism, proteostasis, and lifespan. In neurons, rescues stress resistance, increases longevity, and, drives expression of lysosomal genes in the intestine and activates the UPR in distal, non-neuronal cell types through a cell-nonautonomous mechanism. In neurons or intestine, plays a role in protection against proteotoxicity, acting via positive modulation of genes involved in lysosomal function, including lipases and the fatty-acid desaturase fat-6. Protection against proteotoxicity in neurons is dependent upon the transcription factor atf-6. This Caenorhabditis elegans protein is X-box-binding protein 1.